Here is a 609-residue protein sequence, read N- to C-terminus: (R)-linalool synthase TPS5, chloroplastic (609 aa).

The N-terminal 42 residues, 1–42 (MVSILSNIGMMVVTFKRPSLFTSLRRRSANNIIITKHSHPIS), are a transit peptide targeting the chloroplast. (2E)-geranyl diphosphate is bound by residues arginine 325, aspartate 362, aspartate 366, arginine 503, and aspartate 506. The Mg(2+) site is built by aspartate 362 and aspartate 366. The DDXXD motif signature appears at 362–366 (DDIYD). The Mg(2+) site is built by aspartate 506, threonine 510, and glutamate 514.

It belongs to the terpene synthase family. Tpsb subfamily. Mg(2+) is required as a cofactor. It depends on Mn(2+) as a cofactor. In terms of tissue distribution, highly expressed in young fruits and plant tops. Expressed in flower buds and trichomes of petioles and stems. Expressed at low levels in young leaves, stems, petioles, sepals and petals.

The protein resides in the plastid. The protein localises to the chloroplast. It catalyses the reaction (2E)-geranyl diphosphate + H2O = (R)-linalool + diphosphate. The catalysed reaction is (2E,6E)-farnesyl diphosphate + H2O = (6E)-nerolidol + diphosphate. Its pathway is secondary metabolite biosynthesis; terpenoid biosynthesis. In terms of biological role, involved in monoterpene (C10) biosynthesis in glandular trichomes. Converts geranyl diphosphate to linalool in glandular trichomes in response to jasmonate (JA). Can convert farnesyl diphosphate to nerolidol in vitro. The protein is (R)-linalool synthase TPS5, chloroplastic of Solanum lycopersicum (Tomato).